The primary structure comprises 367 residues: Teichoic acid glycerol-phosphate primase (367 aa).

Belongs to the CDP-glycerol glycerophosphotransferase family.

It localises to the cell membrane. It carries out the reaction N-acetyl-beta-D-mannosaminyl-(1-&gt;4)-N-acetyl-alpha-D-glucosaminyl di-trans,octa-cis-undecaprenyl diphosphate + CDP-glycerol = 4-O-[(2R)-glycerylphospho]-N-acetyl-beta-D-mannosaminyl-(1-&gt;4)-N-acetyl-alpha-D-glucosaminyl di-trans,octa-cis-undecaprenyl diphosphate + CMP + H(+). It functions in the pathway cell wall biogenesis; poly(ribitol phosphate) teichoic acid biosynthesis. Catalyzes the addition of a single glycerol phosphate residue to the prenoldiphosphate-linked disaccharide. This chain is Teichoic acid glycerol-phosphate primase (tarB), found in Staphylococcus aureus (strain NCTC 8325 / PS 47).